The sequence spans 263 residues: Small ribosomal subunit protein uS2m (263 aa).

Residues 1–15 constitute a mitochondrion transit peptide; sequence MLSRKLSPEQLVARR.

The protein belongs to the universal ribosomal protein uS2 family. As to quaternary structure, component of the mitochondrial small ribosomal subunit (mt-SSU). Mature yeast 74S mitochondrial ribosomes consist of a small (37S) and a large (54S) subunit. The 37S small subunit contains a 15S ribosomal RNA (15S mt-rRNA) and at least 32 different proteins. The 54S large subunit contains a 21S rRNA (21S mt-rRNA) and at least 45 different proteins.

It is found in the mitochondrion. In terms of biological role, component of the mitochondrial ribosome (mitoribosome), a dedicated translation machinery responsible for the synthesis of mitochondrial genome-encoded proteins, including at least some of the essential transmembrane subunits of the mitochondrial respiratory chain. The mitoribosomes are attached to the mitochondrial inner membrane and translation products are cotranslationally integrated into the membrane. The chain is Small ribosomal subunit protein uS2m from Schizosaccharomyces pombe (strain 972 / ATCC 24843) (Fission yeast).